Here is a 313-residue protein sequence, read N- to C-terminus: Homeobox protein CDX-2 (313 aa).

Position 60 is a phosphoserine (Ser60). The segment at 113 to 153 is disordered; it reads HAHHHPHHHPHHPAAAPSCASGLLQTLNPGPPGPAATGAAE. The segment covering 114–124 has biased composition (basic residues); sequence AHHHPHHHPHH. An interaction with DNA region spans residues 185-215; sequence KDKYRVVYTDHQRLELEKEFHYSRYITIRRK. Residues 185–244 constitute a DNA-binding region (homeobox); the sequence is KDKYRVVYTDHQRLELEKEFHYSRYITIRRKAELAATLGLSERQVKIWFQNRRAKERKIN. The interaction with 5-mCpG DNA stretch occupies residues 227-241; that stretch reads RQVKIWFQNRRAKER. The segment at 242 to 313 is disordered; sequence KINKKKLQQQ…GGVLNPTVTQ (72 aa). 2 stretches are compositionally biased toward low complexity: residues 249 to 261 and 271 to 300; these read QQQQ…QQLA and QPGS…PGVL. Ser283 bears the Phosphoserine mark. The 4S motif; modulates transactivation activity and protein stability signature appears at 283–295; the sequence is SPVSSLQGSVPGS.

It belongs to the Caudal homeobox family. In terms of assembly, can bind DNA as a monomer or homodimer. In terms of processing, ubiquitinated, leading to its degradation by the proteasome. Post-translationally, phosphorylation at Ser-60 reduces transactivation capacity. Phosphorylation at Ser-283 reduces transactivation capacity and also increases ubiquitin-dependent proteasome degradation. Expressed in the intestine.

The protein resides in the nucleus. Its function is as follows. Transcription factor which regulates the transcription of multiple genes expressed in the intestinal epithelium. Binds to the promoter of the intestinal sucrase-isomaltase SI and activates SI transcription. Binds to the DNA sequence 5'-ATAAAAACTTAT-3' in the promoter region of VDR and activates VDR transcription. Binds to and activates transcription of LPH. Activates transcription of CLDN2 and intestinal mucin MUC2. Binds to the 5'-AATTTTTTACAACACCT-3' DNA sequence in the promoter region of CA1 and activates CA1 transcription. Important in broad range of functions from early differentiation to maintenance of the intestinal epithelial lining of both the small and large intestine. Binds preferentially to methylated DNA. The sequence is that of Homeobox protein CDX-2 (CDX2) from Mesocricetus auratus (Golden hamster).